An 86-amino-acid polypeptide reads, in one-letter code: Small ribosomal subunit protein bS20 (86 aa).

The protein belongs to the bacterial ribosomal protein bS20 family.

Binds directly to 16S ribosomal RNA. This chain is Small ribosomal subunit protein bS20, found in Mycolicibacterium vanbaalenii (strain DSM 7251 / JCM 13017 / BCRC 16820 / KCTC 9966 / NRRL B-24157 / PYR-1) (Mycobacterium vanbaalenii).